Here is a 118-residue protein sequence, read N- to C-terminus: Small ribosomal subunit protein uS13 (118 aa).

The interval 94 to 118 (GLPVRGQRTKTNARTRKGPRKPIKK) is disordered.

This sequence belongs to the universal ribosomal protein uS13 family. As to quaternary structure, part of the 30S ribosomal subunit. Forms a loose heterodimer with protein S19. Forms two bridges to the 50S subunit in the 70S ribosome.

In terms of biological role, located at the top of the head of the 30S subunit, it contacts several helices of the 16S rRNA. In the 70S ribosome it contacts the 23S rRNA (bridge B1a) and protein L5 of the 50S subunit (bridge B1b), connecting the 2 subunits; these bridges are implicated in subunit movement. Contacts the tRNAs in the A and P-sites. The polypeptide is Small ribosomal subunit protein uS13 (Pasteurella multocida (strain Pm70)).